Here is a 418-residue protein sequence, read N- to C-terminus: Serine/threonine transporter SstT (418 aa).

8 helical membrane-spanning segments follow: residues 21–41 (ILIG…AAIA), 49–69 (FVGA…IASI), 83–103 (ILFL…VVSF), 142–162 (ALLN…GIAL), 190–210 (FAPL…GFGA), 217–237 (LLVV…PLIV), 299–319 (MAGA…TLGI), and 331–351 (VVAA…LLLI).

Belongs to the dicarboxylate/amino acid:cation symporter (DAACS) (TC 2.A.23) family.

It localises to the cell inner membrane. It catalyses the reaction L-serine(in) + Na(+)(in) = L-serine(out) + Na(+)(out). The catalysed reaction is L-threonine(in) + Na(+)(in) = L-threonine(out) + Na(+)(out). Involved in the import of serine and threonine into the cell, with the concomitant import of sodium (symport system). In Yersinia pseudotuberculosis serotype O:1b (strain IP 31758), this protein is Serine/threonine transporter SstT.